Consider the following 224-residue polypeptide: Glycerol-3-phosphate acyltransferase (224 aa).

Transmembrane regions (helical) follow at residues 14-34 (INMI…GWLL), 70-90 (YLSI…VLGA), 99-119 (TQWS…YLGF), 129-149 (IGSV…IWGI), 162-182 (LIGV…LPLP), and 185-205 (ISII…LFIF).

Belongs to the PlsY family. As to quaternary structure, probably interacts with PlsX.

The protein resides in the cell inner membrane. It catalyses the reaction an acyl phosphate + sn-glycerol 3-phosphate = a 1-acyl-sn-glycero-3-phosphate + phosphate. The protein operates within lipid metabolism; phospholipid metabolism. Catalyzes the transfer of an acyl group from acyl-phosphate (acyl-PO(4)) to glycerol-3-phosphate (G3P) to form lysophosphatidic acid (LPA). This enzyme utilizes acyl-phosphate as fatty acyl donor, but not acyl-CoA or acyl-ACP. This is Glycerol-3-phosphate acyltransferase from Helicobacter hepaticus (strain ATCC 51449 / 3B1).